We begin with the raw amino-acid sequence, 910 residues long: Putative coatomer subunit beta'-3 (910 aa).

WD repeat units lie at residues 13 to 52 (QRSE…MVKS), 55 to 94 (VTEL…KVKV), 97 to 136 (AHTD…MCTQ), 140 to 180 (GHSH…PNFT), 183 to 224 (GHSK…CVQT), 227 to 266 (GHAH…LENT), 269 to 309 (YGLE…ASMD), 351 to 393 (TCDL…GSAL), and 461 to 501 (RIDV…SHLD). Residues 865–884 (ENGVEESQEDAVEVDVEADG) show a composition bias toward acidic residues. Residues 865 to 910 (ENGVEESQEDAVEVDVEADGSTDGTVLVNGNDTEEQWGTNNEESLA) form a disordered region. The span at 886 to 910 (TDGTVLVNGNDTEEQWGTNNEESLA) shows a compositional bias: polar residues.

It belongs to the WD repeat COPB2 family. As to quaternary structure, oligomeric complex that consists of at least the alpha, beta, beta', gamma, delta, epsilon and zeta subunits.

It localises to the cytoplasm. The protein localises to the golgi apparatus membrane. The protein resides in the cytoplasmic vesicle. Its subcellular location is the COPI-coated vesicle membrane. In terms of biological role, the coatomer is a cytosolic protein complex that binds to dilysine motifs and reversibly associates with Golgi non-clathrin-coated vesicles, which further mediate biosynthetic protein transport from the ER, via the Golgi up to the trans Golgi network. Coatomer complex is required for budding from Golgi membranes, and is essential for the retrograde Golgi-to-ER transport of dilysine-tagged proteins. This Oryza sativa subsp. japonica (Rice) protein is Putative coatomer subunit beta'-3.